Here is a 280-residue protein sequence, read N- to C-terminus: Putative pyruvate, phosphate dikinase regulatory protein (280 aa).

154–161 (GVSRTSKT) is a binding site for ADP.

This sequence belongs to the pyruvate, phosphate/water dikinase regulatory protein family. PDRP subfamily.

It catalyses the reaction N(tele)-phospho-L-histidyl/L-threonyl-[pyruvate, phosphate dikinase] + ADP = N(tele)-phospho-L-histidyl/O-phospho-L-threonyl-[pyruvate, phosphate dikinase] + AMP + H(+). The catalysed reaction is N(tele)-phospho-L-histidyl/O-phospho-L-threonyl-[pyruvate, phosphate dikinase] + phosphate + H(+) = N(tele)-phospho-L-histidyl/L-threonyl-[pyruvate, phosphate dikinase] + diphosphate. In terms of biological role, bifunctional serine/threonine kinase and phosphorylase involved in the regulation of the pyruvate, phosphate dikinase (PPDK) by catalyzing its phosphorylation/dephosphorylation. In Nitrobacter hamburgensis (strain DSM 10229 / NCIMB 13809 / X14), this protein is Putative pyruvate, phosphate dikinase regulatory protein.